Here is a 476-residue protein sequence, read N- to C-terminus: Serine protease HTRA1B (476 aa).

The signal sequence occupies residues 1 to 19 (MRLLILCASIILVPLLCDA). Residues 25–109 (YVIGCPERCD…RGKTGVCVCK (85 aa)) enclose the IGFBP N-terminal domain. 6 disulfide bridges follow: Cys-29–Cys-54, Cys-33–Cys-56, Cys-38–Cys-57, Cys-45–Cys-60, Cys-68–Cys-85, and Cys-79–Cys-106. Residues 94–153 (TTTVRRRGKTGVCVCKSSEPVCGSDGVSYRNICELKRVSNRAQKLQQPPIIFIQRGACGK) enclose the Kazal-like domain. The segment at 200–360 (GSGFVVSEDG…IPSDKIRQFL (161 aa)) is serine protease. Residues His-216, Asp-246, and Ser-324 each act as charge relay system in the active site. The PDZ domain maps to 361-463 (AESHDRQAKG…LRAVVRRGNE (103 aa)).

It belongs to the peptidase S1C family. In terms of assembly, forms homotrimers. In the presence of substrate, may form higher-order multimers in a PDZ-independent manner.

It localises to the secreted. The protein resides in the cytoplasm. The protein localises to the cytosol. Serine protease with a variety of targets, including extracellular matrix proteins and proteoglycans. Through cleavage of proteoglycans, may release soluble FGF-glycosaminoglycan complexes that promote the range and intensity of FGF signals in the extracellular space. Regulates the availability of insulin-like growth factors (IGFs) by cleaving IGF-binding proteins. Inhibits signaling mediated by TGF-beta family members. Consequently, may regulate many physiological processes. Intracellularly, degrades TSC2, leading to the activation of TSC2 downstream targets. This Danio rerio (Zebrafish) protein is Serine protease HTRA1B (htra1b).